A 333-amino-acid chain; its full sequence is Serine proteinase inhibitor 2 (333 aa).

This sequence belongs to the serpin family. Poxviruses subfamily.

Its subcellular location is the host cytoplasm. Its function is as follows. Weak inhibitor of the interleukin-1-beta converting enzyme (ICE) and of granzyme B. Does not form a stable complex with ICE, but can for a stable complex with granzyme B. In Myxoma virus (strain Uriarra) (MYXV), this protein is Serine proteinase inhibitor 2 (SERP2).